We begin with the raw amino-acid sequence, 653 residues long: Leucine-rich repeat-containing protein 4 (653 aa).

An N-terminal signal peptide occupies residues 1 to 38 (MKLLWQVTVHHHTWNAILLPFVYLTAQVWILCAAIAAA). In terms of domain architecture, LRRNT spans 39-75 (ASAGPQNCPSVCSCSNQFSKVVCTRRGLSEVPQGIPS). The Extracellular segment spans residues 39–527 (ASAGPQNCPS…SLDEVMKTTK (489 aa)). 2 cysteine pairs are disulfide-bonded: C46–C52 and C50–C61. LRR repeat units follow at residues 76–97 (NTRY…TFRH), 100–121 (HLEV…AFNG), 124–145 (SLNT…AFEY), 148–169 (KLRE…AFNR), 172–194 (SLMR…AFEG), 197–218 (NLKY…TPLV), 219–240 (GLEE…SFHG), 243–264 (SLKK…AFDG), and 267–288 (SLVE…LFTP). N-linked (GlcNAc...) asparagine glycosylation is found at N277, N322, N363, N388, N410, N434, N440, N447, and N450. Residues 300–352 (NPWNCDCDILWLAWWLREYIPTNSTCCGRCHAPMHMRGRYLVEVDQASFQCSA) form the LRRCT domain. Disulfide bonds link C304–C329 and C306–C350. An Ig-like domain is found at 353-442 (PFIMDAPRDL…SNASAYLNVS (90 aa)). A disulfide bond links C374 and C424. A helical transmembrane segment spans residues 528–548 (IIIGCFVAVTLLAAAMLIVFY). Topologically, residues 549–653 (KLRKRHQQRS…TKDKVQETQI (105 aa)) are cytoplasmic.

Interacts with DLG4. Interacts (via LRR repeats) with NTNG2. Forms a complex with DLG4 and with NMDA receptors. N-glycosylated. Specifically expressed in brain.

Its subcellular location is the membrane. It is found in the postsynaptic cell membrane. Functionally, synaptic adhesion protein. Regulates the formation of exitatory synapses through the recruitment of pre-and-postsynaptic proteins. Organize the lamina/pathway-specific differentiation of dendrites. Plays an important role for auditory synaptic responses. Involved in the suppression of glioma. This is Leucine-rich repeat-containing protein 4 (LRRC4) from Homo sapiens (Human).